The sequence spans 291 residues: Probable aquaporin PIP2-4 (291 aa).

N-acetylmethionine is present on methionine 1. The tract at residues 1–22 (MAKDLDVNESGPPAARDYKDPP) is disordered. Residue alanine 2 is modified to N-acetylalanine; in Probable aquaporin PIP2-4, N-terminally processed. Over 2-39 (AKDLDVNESGPPAARDYKDPPPAPFFDMEELRKWPLYR) the chain is Cytoplasmic. Lysine 3 bears the N6,N6-dimethyllysine mark. A helical membrane pass occupies residues 40–60 (AVIAEFVATLLFLYVSILTVI). Over 61 to 74 (GYKAQTDATAGGVD) the chain is Extracellular. A helical transmembrane segment spans residues 75–95 (CGGVGILGIAWAFGGMIFVLV). At 96 to 125 (YCTAGISGGHINPAVTVGLFLARKVSLVRT) the chain is on the cytoplasmic side. Residues 107–109 (NPA) carry the NPA 1 motif. Residues 126-146 (VLYIVAQCLGAICGCGFVKAF) traverse the membrane as a helical segment. Residues 147–167 (QSSYYTRYGGGANELADGYNK) are Extracellular-facing. A helical membrane pass occupies residues 168-188 (GTGLGAEIIGTFVLVYTVFSA). Over 189 to 201 (TDPKRNARDSHVP) the chain is Cytoplasmic. Residues 202-222 (VLAPLPIGFAVFMVHLATIPI) traverse the membrane as a helical segment. Over 223–249 (TGTGINPARSFGAAVIYNNEKAWDDQW) the chain is Extracellular. The NPA 2 motif lies at 228-230 (NPA). A helical membrane pass occupies residues 250–270 (IFWVGPMIGAAAAAFYHQFIL). Over 271 to 291 (RAAAIKALGSFGSFGSFRSFA) the chain is Cytoplasmic. Phosphoserine occurs at positions 283, 286, and 289.

The protein belongs to the MIP/aquaporin (TC 1.A.8) family. PIP (TC 1.A.8.11) subfamily. Expressed in roots.

The protein resides in the cell membrane. Functionally, aquaporins facilitate the transport of water and small neutral solutes across cell membranes. The polypeptide is Probable aquaporin PIP2-4 (PIP2-4) (Arabidopsis thaliana (Mouse-ear cress)).